The following is a 126-amino-acid chain: UPF0102 protein gll3754 (126 aa).

This sequence belongs to the UPF0102 family.

This Gloeobacter violaceus (strain ATCC 29082 / PCC 7421) protein is UPF0102 protein gll3754.